The sequence spans 213 residues: uncharacterized protein (213 aa).

The span at 1–14 (MSSDVLVTTPAQRQ) shows a compositional bias: polar residues. Positions 1 to 26 (MSSDVLVTTPAQRQTEPHAEAVSRNR) are disordered. Positions 29-89 (QATFRKVLAA…EVYLDLVRQV (61 aa)) constitute an HTH tetR-type domain.

This is an uncharacterized protein from Mycobacterium tuberculosis (strain CDC 1551 / Oshkosh).